Here is a 221-residue protein sequence, read N- to C-terminus: Pre-rRNA-processing protein SRD1 (221 aa).

The span at 101–110 (SKNRVTSACN) shows a compositional bias: polar residues. Disordered stretches follow at residues 101–121 (SKNRVTSACNSERRTTSQEAN) and 137–161 (ASITKKYSKKTTSRPKREKRQTILP). Residues 142-155 (KYSKKTTSRPKREK) show a composition bias toward basic residues. The GATA-type zinc-finger motif lies at 168 to 193 (CSKCKDTWTIQWRSGPDQNRELCSPC). Positions 201–221 (LKKENEKKRQAADKRIDRNNP) are disordered. Residues 203 to 221 (KENEKKRQAADKRIDRNNP) are compositionally biased toward basic and acidic residues.

It localises to the cytoplasm. The protein resides in the nucleus. Functionally, plays a direct or indirect role in pre-rRNA processing. The protein is Pre-rRNA-processing protein SRD1 (SRD1) of Saccharomyces cerevisiae (strain ATCC 204508 / S288c) (Baker's yeast).